The sequence spans 137 residues: uncharacterized protein (137 aa).

A helical transmembrane segment spans residues 111–131; sequence LAVGVLVGSNLVVGSLVFALL.

The protein localises to the membrane. This is an uncharacterized protein from Saccharomyces cerevisiae (strain ATCC 204508 / S288c) (Baker's yeast).